The primary structure comprises 131 residues: uncharacterized protein (131 aa).

The next 4 helical transmembrane spans lie at leucine 7–tyrosine 29, leucine 49–leucine 69, leucine 76–tyrosine 98, and glutamate 102–leucine 124.

The protein localises to the cell membrane. This is an uncharacterized protein from Aquifex aeolicus (strain VF5).